The primary structure comprises 953 residues: MSSRTGASLLLILFFFQICSVSALTNGLDASALNALKSEWTTPPDGWEGSDPCGTNWVGITCQNDRVVSISLGNLDLEGKLPADISFLSELRILDLSYNPKLSGPLPPNIGNLGKLRNLILVGCSFSGQIPESIGTLKELIYLSLNLNKFSGTIPPSIGLLSKLYWFDIADNQIEGELPVSNGTSAPGLDMLLQTKHFHFGKNKLSGNIPKELFSSNMSLIHVLFDGNQFTGEIPETLSLVKTLTVLRLDRNKLIGDIPSYLNNLTNLNELYLANNRFTGTLPNLTSLTSLYTLDVSNNTLDFSPIPSWISSLPSLSTLRMEGIQLNGPIPISFFSPPQLQTVILKRNSIVESLDFGTDVSSQLEFVDLQYNEITDYKPSANKVLQVILANNPVCLEAGNGPSYCSAIQHNTSFSTLPTNCSPCEPGMEASPTCRCAYPFMGTLYFRSPSFSGLFNSTNFSILQKAIADFFKKFNYPVDSVGVRNIRENPTDHQLLIDLLVFPLGRESFNQTGMSLVGFAFSNQTYKPPPIFGPYIFKADLYKQFSDVEVSSKSSNKSILIGAVVGVVVLLLLLTIAGIYALRQKKRAERATGQNNPFAKWDTSKSSIDAPQLMGAKAFTFEELKKCTDNFSEANDVGGGGYGKVYRGILPNGQLIAIKRAQQGSLQGGLEFKTEIELLSRVHHKNVVRLLGFCFDRNEQMLVYEYISNGSLKDSLSGKSGIRLDWTRRLKIALGSGKGLAYLHELADPPIIHRDIKSNNILLDENLTAKVADFGLSKLVGDPEKTHVTTQVKGTMGYLDPEYYMTNQLTEKSDVYGFGVVLLELLTGRSPIERGKYVVREVKTKMNKSRSLYDLQELLDTTIIASSGNLKGFEKYVDLALRCVEEEGVNRPSMGEVVKEIENIMQLAGLNPNSDSATSSRTYEDAIKGSGDPYGSESFQYSGNFPASKLEPQ.

The signal sequence occupies residues Met-1 to Ala-23. Over Leu-24–Ser-558 the chain is Extracellular. LRR repeat units lie at residues Asn-64–Leu-88, Ser-89–Leu-113, Lys-115–Leu-137, Lys-138–Ser-162, Leu-164–Pro-187, and Leu-192–Ser-216. N-linked (GlcNAc...) asparagine glycosylation occurs at Asn-182. Asn-217 carries N-linked (GlcNAc...) asparagine glycosylation. LRR repeat units follow at residues Met-218–Val-241, Lys-242–Leu-265, Thr-266–Ser-290, Tyr-292–Ser-311, Leu-313–Pro-337, Gln-339–Ser-361, and Ser-362–Val-384. Asn-264, Asn-284, and Asn-298 each carry an N-linked (GlcNAc...) asparagine glycan. Residue Asn-411 is glycosylated (N-linked (GlcNAc...) asparagine). Cystine bridges form between Cys-421–Cys-424 and Cys-434–Cys-436. N-linked (GlcNAc...) asparagine glycans are attached at residues Asn-456, Asn-459, Asn-510, and Asn-523. The helical transmembrane segment at Ile-559–Ile-579 threads the bilayer. The Cytoplasmic segment spans residues Tyr-580 to Gln-953. Phosphoserine is present on residues Ser-606 and Ser-607. The Protein kinase domain occupies Phe-631–Met-905. Residues Val-637–Val-645 and Lys-659 contribute to the ATP site. Asp-755 (proton acceptor) is an active-site residue. Residues Thr-786, Thr-789, and Thr-790 each carry the phosphothreonine modification. Residues Pro-912–Arg-921 are compositionally biased toward polar residues. The segment at Pro-912–Gln-953 is disordered. Residue Ser-942 is modified to Phosphoserine.

It belongs to the protein kinase superfamily. Ser/Thr protein kinase family. In terms of processing, autophosphorylated at Ser-606, Ser-607, Thr-786, Thr-789, Thr-790 and Ser-942 in response to extracellular hydrogen peroxide. As to expression, widely expressed.

It localises to the cell membrane. It catalyses the reaction L-seryl-[protein] + ATP = O-phospho-L-seryl-[protein] + ADP + H(+). The enzyme catalyses L-threonyl-[protein] + ATP = O-phospho-L-threonyl-[protein] + ADP + H(+). With respect to regulation, activated by autophosphorylation on serine and threonine residues in response to extracellular hydrogen peroxide. In terms of biological role, leucine-rich repeat receptor protein kinase that acts as sensor of extracellular hydrogen peroxide. Required for intracellular calcium influx in response to extracellular hydrogen peroxide. Mediates hydrogen peroxide-induced activation of calcium channels in guard cells and is required for stomatal closure. This chain is Leucine-rich repeat receptor protein kinase HPCA1, found in Arabidopsis thaliana (Mouse-ear cress).